Here is a 402-residue protein sequence, read N- to C-terminus: AA9 family lytic polysaccharide monooxygenase E (402 aa).

The N-terminal stretch at 1 to 16 (MSRLVSFASLLAAVNA) is a signal peptide. His-17 serves as a coordination point for Cu(2+). 2 disulfides stabilise this stretch: Cys-72/Cys-194 and Cys-113/Cys-117. Asn-75 carries N-linked (GlcNAc...) asparagine glycosylation. Position 102 (His-102) interacts with Cu(2+). Asn-154 carries N-linked (GlcNAc...) asparagine glycosylation. The O2 site is built by His-180 and Gln-189. Position 191 (Tyr-191) interacts with Cu(2+). Residues 364-400 (GSNPLYAQCGGLNFKGASGCVAGATCKKMNPYYSQCV) enclose the CBM1 domain.

This sequence belongs to the polysaccharide monooxygenase AA9 family. The cofactor is Cu(2+).

It is found in the secreted. The catalysed reaction is [(1-&gt;4)-beta-D-glucosyl]n+m + reduced acceptor + O2 = 4-dehydro-beta-D-glucosyl-[(1-&gt;4)-beta-D-glucosyl]n-1 + [(1-&gt;4)-beta-D-glucosyl]m + acceptor + H2O.. In terms of biological role, lytic polysaccharide monooxygenase (LPMO) that depolymerizes crystalline and amorphous polysaccharides via the oxidation of scissile alpha- or beta-(1-4)-glycosidic bonds, yielding C1 or C4 oxidation products. Catalysis by LPMOs requires the reduction of the active-site copper from Cu(II) to Cu(I) by a reducing agent and H(2)O(2) or O(2) as a cosubstrate. This Emericella nidulans (strain FGSC A4 / ATCC 38163 / CBS 112.46 / NRRL 194 / M139) (Aspergillus nidulans) protein is AA9 family lytic polysaccharide monooxygenase E.